Here is a 7481-residue protein sequence, read N- to C-terminus: Polyketide synthase GfsA (7481 aa).

Residues 24-1020 (ASDEPIAVIG…ETAEFVRARL (997 aa)) form a loading module (LM) region. Positions 26–451 (DEPIAVIGLS…GTNCHVVVSA (426 aa)) constitute a Ketosynthase family 3 (KS3) 1 domain. Positions 60 to 80 (RVPADRETPPSTEEESADGEA) are disordered. The active-site For decarboxylation activity of LM is the Q197. Residue S662 is the For acyltransferase activity of LM of the active site. The Carrier 1 domain maps to 945-1020 (PDPVETVRQL…ETAEFVRARL (76 aa)). O-(pantetheine 4'-phosphoryl)serine is present on S980. The Ketosynthase family 3 (KS3) 2 domain occupies 1038–1454 (DEPIAVVAMS…GTNAHVILEQ (417 aa)). Module stretches follow at residues 1038–2517 (DEPI…AGEL), 2538–4063 (EDPI…LQRI), 4084–5636 (DDPI…GSEV), and 5655–7400 (DEPV…GEQL). Active-site for beta-ketoacyl synthase 1 activity residues include C1201, H1336, and H1376. Residues 2442–2517 (RVLLDLVRGR…ALAEHLAGEL (76 aa)) form the Carrier 2 domain. S2477 carries the O-(pantetheine 4'-phosphoryl)serine modification. A Ketosynthase family 3 (KS3) 3 domain is found at 2538-2964 (EDPIAIVAMS…GTNAHVIIEE (427 aa)). Catalysis depends on for beta-ketoacyl synthase 2 activity residues C2711, H2846, and H2886. Positions 3988-4063 (QALQDLVLTE…ATTEYLLQRI (76 aa)) constitute a Carrier 3 domain. The residue at position 4023 (S4023) is an O-(pantetheine 4'-phosphoryl)serine. Residues 4084-4514 (DDPIAIVAMG…GTNAHVILEQ (431 aa)) form the Ketosynthase family 3 (KS3) 4 domain. Catalysis depends on for beta-ketoacyl synthase 3 activity residues C4261, H4396, and H4436. The 76-residue stretch at 5561–5636 (TALLDLIRGQ…ALAEYVGSEV (76 aa)) folds into the Carrier 4 domain. Position 5596 is an O-(pantetheine 4'-phosphoryl)serine (S5596). One can recognise a Ketosynthase family 3 (KS3) 5 domain in the interval 5655 to 6081 (DEPVAIIGMS…GTNAHVILEQ (427 aa)). Active-site for beta-ketoacyl synthase 4 activity residues include C5828, H5963, and H6003. The tract at residues 6561–6685 (HPLLGAAVAL…GVLASGAATV (125 aa)) is N-terminal hotdog fold. One can recognise a PKS/mFAS DH domain in the interval 6561-6841 (HPLLGAAVAL…LRPVSADTIA (281 aa)). Catalysis depends on H6593, which acts as the Proton acceptor; for dehydratase activity. The segment at 6700–6841 (ATAVDIDGLY…LRPVSADTIA (142 aa)) is C-terminal hotdog fold. Residue D6761 is the Proton donor; for dehydratase activity of the active site. Positions 7325–7400 (QELLDFVCEH…LLAGHIGEQL (76 aa)) constitute a Carrier 5 domain. O-(pantetheine 4'-phosphoryl)serine is present on S7360.

In terms of assembly, homodimer. The loading module (LM, residues 13-926) dimerizes. LM cross-links to its cognate acyl-carrier domain in a manner that seems physiological; mutation of residues in the 2 domains alters reactions efficiency in a manner predicted by the cross-linked crystal. The cofactor is pantetheine 4'-phosphate.

Its pathway is antibiotic biosynthesis. First protein in the synthesis of the 16-membered macrolide antibiotics FD-891 and FD-892. Composed of 5 modules; the first is a loading module (LM) that synthesizes a starter unit used by the first elongation module for polyketide chain elongation. The starter unit is extended by multiple rounds of addition of malonyl-CoA or methylmalonyl-CoA, and other modifications to help generate the final products. The loading module (residues 1-927, LM with an inactive acyltransferase domain) preferentially decarboxylates malonyl-GfsA acyl carrier protein of the LM (ACP-LM) over methylmalonyl-GfsA ACP-LM and has no activity on malonyl-CoA or methymalonyl-CoA. LM decarboxylates malonyl-ACP-LM better than the malonyl-ACP-1 module of GfsA (i.e. the next module in the same protein) and has no activity on other malonyl-ACP modules. This Streptomyces halstedii protein is Polyketide synthase GfsA.